Here is a 182-residue protein sequence, read N- to C-terminus: MMAFWKIFFKHHNIFSSNLNNQLVNQDAADKILLVKYLEGRGTIVNVYLSFNSYVNLHDLEKLCDSVGWVRRPLKKVKIAIDNSFVTASLFYEQNKKKFLIGFARATSDTSFNATIWDVVIHPDFQGQGLGKMLMAQIIKQLRYEDINTITLFADPQVVNFYKHLGFITDPDGVKGMFWYPL.

Residues 55 to 182 (VNLHDLEKLC…GVKGMFWYPL (128 aa)) form the N-acetyltransferase domain.

This sequence belongs to the acetyltransferase family. Ycf52 subfamily.

It localises to the plastid. It is found in the chloroplast. This is an uncharacterized protein from Gracilaria tenuistipitata var. liui (Red alga).